The sequence spans 721 residues: Exo beta-1,2-glucooligosaccharide sophorohydrolase (non-reducing end) (721 aa).

The signal sequence occupies residues 1 to 18; it reads MKHIALLTTLLLSASLQA. One can recognise a Glycoamylase-like domain in the interval 474 to 708; sequence NHKLIGWNET…LLWNLFMSHP (235 aa).

In terms of assembly, monomer.

It is found in the periplasm. The enzyme catalyses [(1-&gt;2)-beta-D-glucosyl](n) + H2O = [(1-&gt;2)-beta-D-glucosyl](n-2) + sophorose. In terms of biological role, catalyzes the hydrolysis of linear beta-1,2-glucan and beta-1,2-glucooligosaccharides with degrees of polymerization (DPs) greater than or equal to 4, to produce sophorose. The best substrates are tetra- and pentasaccharides. Acts as an exo-type enzyme that releases sophorose from the non-reducing end of the substrate. It cannot hydrolyze cyclic beta-1,2-glucans. In Parabacteroides distasonis (strain ATCC 8503 / DSM 20701 / CIP 104284 / JCM 5825 / NCTC 11152), this protein is Exo beta-1,2-glucooligosaccharide sophorohydrolase (non-reducing end).